Reading from the N-terminus, the 173-residue chain is DNA-directed RNA polymerase subunit delta (173 aa).

Residues 14 to 81 enclose the HTH HARE-type domain; that stretch reads MALVEIAHEL…SDQTWGLRSW (68 aa). The disordered stretch occupies residues 110–173; it reads LDLDEFEEID…DYDDEEEEIK (64 aa).

Belongs to the RpoE family. RNAP is composed of a core of 2 alpha, a beta and a beta' subunit. The core is associated with a delta subunit, and at least one of epsilon or omega. When a sigma factor is associated with the core the holoenzyme is formed, which can initiate transcription.

Its function is as follows. Participates in both the initiation and recycling phases of transcription. In the presence of the delta subunit, RNAP displays an increased specificity of transcription, a decreased affinity for nucleic acids, and an increased efficiency of RNA synthesis because of enhanced recycling. May function in sigma factor switching. It displaces RNA bound to RNA polymerase in a binary complex. The chain is DNA-directed RNA polymerase subunit delta from Bacillus subtilis (strain 168).